The sequence spans 250 residues: Phosphate import ATP-binding protein PstB (250 aa).

Positions 4 to 245 (LTARDLKLSF…PRHELTEKYV (242 aa)) constitute an ABC transporter domain. Residue 36–43 (GPSGSGKS) coordinates ATP.

It belongs to the ABC transporter superfamily. Phosphate importer (TC 3.A.1.7) family. The complex is composed of two ATP-binding proteins (PstB), two transmembrane proteins (PstC and PstA) and a solute-binding protein (PstS).

The protein resides in the cell membrane. The enzyme catalyses phosphate(out) + ATP + H2O = ADP + 2 phosphate(in) + H(+). Part of the ABC transporter complex PstSACB involved in phosphate import. Responsible for energy coupling to the transport system. In Pyrobaculum aerophilum (strain ATCC 51768 / DSM 7523 / JCM 9630 / CIP 104966 / NBRC 100827 / IM2), this protein is Phosphate import ATP-binding protein PstB.